The sequence spans 568 residues: Polyprotein P2A (568 aa).

2 helical membrane-spanning segments follow: residues 10-30 and 41-61; these read KSVMLMSRMSWSKLALLISVA and TLICMGILVSVVLNWIVCAVC. A Peptidase S39 domain is found at 129–326; sequence VENSRLQPLE…TVENSELYPD (198 aa). Catalysis depends on for protease activity residues histidine 176, aspartate 209, and serine 276. Residue threonine 339 is modified to Phosphothreonine; by host. Serine 390 bears the Phosphoserine; by host mark. Disordered stretches follow at residues 403-435 and 469-568; these read LNYQRAGSLRGSPPLANLSSTRATSGVTKESSI and SSQN…ATSK. 2 stretches are compositionally biased toward polar residues: residues 419-435 and 469-478; these read NLSSTRATSGVTKESSI and SSQNSKSSLG. The span at 481–502 shows a compositional bias: basic and acidic residues; sequence ADRKQKSDRSSSKPEGLKESKR. A compositionally biased stretch (polar residues) spans 507 to 516; the sequence is NWQSLTSKPS. Residues 539 to 549 show a composition bias toward basic residues; that stretch reads KSKRSRTRGKS. Positions 554-568 are enriched in polar residues; that stretch reads VPASPSPKSGSATSK.

The protein localises to the host membrane. In terms of biological role, responsible for cleavages of polyprotein P2A and replicase polyprotein P2AB. Functionally, covalently attached to the 5' extremity of the genomic and subgenomic RNAs. It may serve as a primer for the replicase. The protein is Polyprotein P2A of Cocksfoot mottle virus (isolate Dactylis glomerata/Norway/CfMV-NO/1995) (CfMV).